Reading from the N-terminus, the 612-residue chain is Dihydroxy-acid dehydratase (612 aa).

D81 provides a ligand contact to Mg(2+). Residue C122 participates in [2Fe-2S] cluster binding. The Mg(2+) site is built by D123 and K124. An N6-carboxylysine modification is found at K124. C195 is a binding site for [2Fe-2S] cluster. E491 contacts Mg(2+). Catalysis depends on S517, which acts as the Proton acceptor.

Belongs to the IlvD/Edd family. As to quaternary structure, homodimer. [2Fe-2S] cluster serves as cofactor. Requires Mg(2+) as cofactor.

It carries out the reaction (2R)-2,3-dihydroxy-3-methylbutanoate = 3-methyl-2-oxobutanoate + H2O. It catalyses the reaction (2R,3R)-2,3-dihydroxy-3-methylpentanoate = (S)-3-methyl-2-oxopentanoate + H2O. Its pathway is amino-acid biosynthesis; L-isoleucine biosynthesis; L-isoleucine from 2-oxobutanoate: step 3/4. It functions in the pathway amino-acid biosynthesis; L-valine biosynthesis; L-valine from pyruvate: step 3/4. In terms of biological role, functions in the biosynthesis of branched-chain amino acids. Catalyzes the dehydration of (2R,3R)-2,3-dihydroxy-3-methylpentanoate (2,3-dihydroxy-3-methylvalerate) into 2-oxo-3-methylpentanoate (2-oxo-3-methylvalerate) and of (2R)-2,3-dihydroxy-3-methylbutanoate (2,3-dihydroxyisovalerate) into 2-oxo-3-methylbutanoate (2-oxoisovalerate), the penultimate precursor to L-isoleucine and L-valine, respectively. The polypeptide is Dihydroxy-acid dehydratase (Buchnera aphidicola subsp. Baizongia pistaciae (strain Bp)).